The chain runs to 92 residues: Bombyxin A-3 (92 aa).

The signal sequence occupies residues Met1 to Thr19. Gln20 is subject to Pyrrolidone carboxylic acid. Cystine bridges form between Cys29–Cys79, Cys41–Cys92, and Cys78–Cys83. The propeptide at Ser50 to Gly70 is c peptide like.

The protein belongs to the insulin family. Heterodimer of a B chain and an A chain linked by two disulfide bonds.

Its subcellular location is the secreted. Brain peptide responsible for activation of prothoracic glands to produce ecdysone in insects. This is Bombyxin A-3 (BBXA3) from Bombyx mori (Silk moth).